Here is a 427-residue protein sequence, read N- to C-terminus: MPALVLLGAQWGDEGKGKATDLLGGSVDYVVRYQGGNNAGHTVVVGDQKYALHLLPSGILSPGCTPVIGNGVVVDPSVLFSELSGLNERGVDTSKLLISGNAHIITPYNVTVDKVTERFLGKRKIGTTGRGIGPTYADKINRVGIRVQDLYDESILTQKVEAALDVKNQMLTKLYNRRAIATGQVVEELLGYADKLAPYVADTVLVLNQALDDDKVVLFEGGQGTLLDIDHGTYPFVTSSNPTAGGACTGAGVGPTKISRVIGILKAYTTRVGAGPFPTELFDEDGEALRRIGGERGVTTGRDRRCGWFDAVIARYATRVNGLTDFFLTKLDVLTGWEQIPVCVAYEIDGKRVEELPYSQSDFHHAKPVYETLPGWSEDITKAKSFSDLPKNAQAYVKALEEMSGAPISAIGVGPGRDETIEINSFL.

GTP contacts are provided by residues 12-18 and 40-42; these read GDEGKGK and GHT. Residue aspartate 13 is the Proton acceptor of the active site. Residues aspartate 13 and glycine 40 each contribute to the Mg(2+) site. IMP is bound by residues 13 to 16, 38 to 41, threonine 128, arginine 142, glutamine 223, threonine 238, and arginine 302; these read DEGK and NAGH. Histidine 41 (proton donor) is an active-site residue. 298 to 304 is a substrate binding site; it reads VTTGRDR. Residues arginine 304, 330 to 332, and 412 to 414 contribute to the GTP site; these read KLD and GVG.

Belongs to the adenylosuccinate synthetase family. Homodimer. Requires Mg(2+) as cofactor.

It localises to the cytoplasm. The catalysed reaction is IMP + L-aspartate + GTP = N(6)-(1,2-dicarboxyethyl)-AMP + GDP + phosphate + 2 H(+). The protein operates within purine metabolism; AMP biosynthesis via de novo pathway; AMP from IMP: step 1/2. Its function is as follows. Plays an important role in the de novo pathway of purine nucleotide biosynthesis. Catalyzes the first committed step in the biosynthesis of AMP from IMP. This is Adenylosuccinate synthetase from Streptomyces coelicolor (strain ATCC BAA-471 / A3(2) / M145).